The primary structure comprises 538 residues: Putative cysteine ligase BshC (538 aa).

The stretch at 248 to 268 (ISKYKEVQEGLRNQQEVIKEL) forms a coiled coil.

It belongs to the BshC family.

Its function is as follows. Involved in bacillithiol (BSH) biosynthesis. May catalyze the last step of the pathway, the addition of cysteine to glucosamine malate (GlcN-Mal) to generate BSH. The protein is Putative cysteine ligase BshC of Bacillus cereus (strain ATCC 14579 / DSM 31 / CCUG 7414 / JCM 2152 / NBRC 15305 / NCIMB 9373 / NCTC 2599 / NRRL B-3711).